We begin with the raw amino-acid sequence, 75 residues long: Large ribosomal subunit protein bL31 (75 aa).

Belongs to the bacterial ribosomal protein bL31 family. Type A subfamily. In terms of assembly, part of the 50S ribosomal subunit.

Its function is as follows. Binds the 23S rRNA. The chain is Large ribosomal subunit protein bL31 from Acidiphilium cryptum (strain JF-5).